A 419-amino-acid polypeptide reads, in one-letter code: Glutamyl-tRNA reductase (419 aa).

Residues 49-52 (TCNR), Ser-107, 112-114 (EPQ), and Gln-118 each bind substrate. Catalysis depends on Cys-50, which acts as the Nucleophile. 187 to 192 (GAGETI) provides a ligand contact to NADP(+).

Belongs to the glutamyl-tRNA reductase family. In terms of assembly, homodimer.

It catalyses the reaction (S)-4-amino-5-oxopentanoate + tRNA(Glu) + NADP(+) = L-glutamyl-tRNA(Glu) + NADPH + H(+). The protein operates within porphyrin-containing compound metabolism; protoporphyrin-IX biosynthesis; 5-aminolevulinate from L-glutamyl-tRNA(Glu): step 1/2. Its function is as follows. Catalyzes the NADPH-dependent reduction of glutamyl-tRNA(Glu) to glutamate 1-semialdehyde (GSA). The chain is Glutamyl-tRNA reductase from Psychromonas ingrahamii (strain DSM 17664 / CCUG 51855 / 37).